The primary structure comprises 77 residues: MPVEKIQIRRDYVLQYMVNNDYSLNQLALEIGVSPATLSRVLNGERRPGQLVIGKMLHYFNLKFEDLFYYDFVDKSQ.

Residues 13–67 (VLQYMVNNDYSLNQLALEIGVSPATLSRVLNGERRPGQLVIGKMLHYFNLKFEDL) form the HTH cro/C1-type domain. The segment at residues 24–43 (LNQLALEIGVSPATLSRVLN) is a DNA-binding region (H-T-H motif).

It localises to the cytoplasm. This is an uncharacterized protein from Bacillus subtilis (strain 168).